Here is a 218-residue protein sequence, read N- to C-terminus: Glutathione S-transferase class-mu 26 kDa isozyme 7 (218 aa).

In terms of domain architecture, GST N-terminal spans 2-83 (PAKLGYWKIR…YIADKHGMLG (82 aa)). Glutathione-binding positions include 7–8 (YW), 41–45 (WLGDK), 54–55 (NL), and 67–68 (QS). The GST C-terminal domain maps to 85–203 (TPEERARISM…KSERFIKWPL (119 aa)). Residue tyrosine 111 participates in substrate binding.

This sequence belongs to the GST superfamily. Mu family. In terms of assembly, homodimer.

It catalyses the reaction RX + glutathione = an S-substituted glutathione + a halide anion + H(+). Its function is as follows. Conjugation of reduced glutathione to a wide number of exogenous and endogenous hydrophobic electrophiles. In terms of biological role, GST isoenzymes appear to play a central role in the parasite detoxification system. Other functions are also suspected including a role in increasing the solubility of haematin in the parasite gut. The sequence is that of Glutathione S-transferase class-mu 26 kDa isozyme 7 from Fasciola hepatica (Liver fluke).